The primary structure comprises 128 residues: Azurin (128 aa).

Residues 1–128 (AECKTTIDST…SMMKGTVTLK (128 aa)) enclose the Plastocyanin-like domain. A disulfide bond links cysteine 3 and cysteine 26. 4 residues coordinate Cu cation: histidine 46, cysteine 112, histidine 117, and methionine 121.

The protein resides in the periplasm. In terms of biological role, transfers electrons from cytochrome c551 to cytochrome oxidase. The chain is Azurin from Pseudomonas fluorescens biotype B.